Consider the following 149-residue polypeptide: Heavy metal-associated isoprenylated plant protein 21 (149 aa).

Positions 25–88 (LQTVDIKVKM…RVKSTGKKAE (64 aa)) constitute an HMA domain. Cys36 and Cys39 together coordinate a metal cation. Position 146 is a cysteine methyl ester (Cys146). The S-farnesyl cysteine moiety is linked to residue Cys146. A propeptide spans 147-149 (SIM) (removed in mature form).

This sequence belongs to the HIPP family. As to quaternary structure, interacts with ZHD11/HB29. As to expression, expressed at low levels in leaves and sepals.

It localises to the membrane. Functionally, heavy-metal-binding protein. Binds cadmium. May be involved in cadmium transport and play a role in cadmium detoxification. This Arabidopsis thaliana (Mouse-ear cress) protein is Heavy metal-associated isoprenylated plant protein 21.